Reading from the N-terminus, the 298-residue chain is GTP cyclohydrolase FolE2 (298 aa).

Belongs to the GTP cyclohydrolase IV family.

The catalysed reaction is GTP + H2O = 7,8-dihydroneopterin 3'-triphosphate + formate + H(+). It participates in cofactor biosynthesis; 7,8-dihydroneopterin triphosphate biosynthesis; 7,8-dihydroneopterin triphosphate from GTP: step 1/1. Converts GTP to 7,8-dihydroneopterin triphosphate. The sequence is that of GTP cyclohydrolase FolE2 from Pseudomonas fluorescens (strain Pf0-1).